The sequence spans 538 residues: Phosphoenolpyruvate carboxykinase (ATP) (538 aa).

Arg64 contacts substrate. Positions 149 and 151 each coordinate Ca(2+). The substrate site is built by Tyr206 and Lys212. ATP contacts are provided by residues Lys212, His231, and 247 to 255 (GLSGTGKTT). Residues Lys212 and His231 each coordinate Mn(2+). A Mn(2+)-binding site is contributed by Asp268. Residues Glu296, Arg332, 447–448 (RI), and Thr453 each bind ATP. Arg332 contributes to the substrate binding site.

This sequence belongs to the phosphoenolpyruvate carboxykinase (ATP) family. Monomer. It depends on Mn(2+) as a cofactor.

It is found in the cytoplasm. It carries out the reaction oxaloacetate + ATP = phosphoenolpyruvate + ADP + CO2. It participates in carbohydrate biosynthesis; gluconeogenesis. With respect to regulation, allosterically activated by calcium. Its function is as follows. Involved in the gluconeogenesis. Catalyzes the conversion of oxaloacetate (OAA) to phosphoenolpyruvate (PEP) through direct phosphoryl transfer between the nucleoside triphosphate and OAA. In Salmonella typhimurium (strain LT2 / SGSC1412 / ATCC 700720), this protein is Phosphoenolpyruvate carboxykinase (ATP).